Here is a 116-residue protein sequence, read N- to C-terminus: Ribosome-binding factor A (116 aa).

This sequence belongs to the RbfA family. As to quaternary structure, monomer. Binds 30S ribosomal subunits, but not 50S ribosomal subunits or 70S ribosomes.

The protein localises to the cytoplasm. Its function is as follows. One of several proteins that assist in the late maturation steps of the functional core of the 30S ribosomal subunit. Associates with free 30S ribosomal subunits (but not with 30S subunits that are part of 70S ribosomes or polysomes). Required for efficient processing of 16S rRNA. May interact with the 5'-terminal helix region of 16S rRNA. In Mycoplasma pneumoniae (strain ATCC 29342 / M129 / Subtype 1) (Mycoplasmoides pneumoniae), this protein is Ribosome-binding factor A.